The following is a 156-amino-acid chain: Putative F-box protein R637 (156 aa).

Residues 4 to 51 form the F-box domain; the sequence is HISSLLNEDCVRHIMCFLTDKEKGKFCLTCRDLLYLIKDVKFNDPVNK.

This chain is Putative F-box protein R637, found in Acanthamoeba polyphaga mimivirus (APMV).